Consider the following 421-residue polypeptide: Synaptotagmin-1 (421 aa).

The segment at 1–40 is disordered; that stretch reads MVSESHHEALAAPPATTVAAAPPSNVTEPASPGGGGGKED. At 1-60 the chain is on the vesicular side; it reads MVSESHHEALAAPPATTVAAAPPSNVTEPASPGGGGGKEDAFSKLKEKFMNELNKIPLPP. The span at 10–23 shows a compositional bias: low complexity; that stretch reads LAAPPATTVAAAPP. N-linked (GlcNAc...) asparagine glycosylation is present at Asn-25. Residues 61–81 form a helical membrane-spanning segment; it reads WALIAIAIVAVLLILTCCFCL. S-palmitoyl cysteine attachment occurs at residues Cys-77, Cys-78, Cys-80, Cys-82, and Cys-85. At 82–421 the chain is on the cytoplasmic side; the sequence is CKKCLFKKKN…EVDAMLAVKK (340 aa). The disordered stretch occupies residues 94 to 139; the sequence is KGKEKGGKNAINMKDVKDLGKTMKDQDDDAETGLTDGEEKEEPKEV. The segment covering 107 to 118 has biased composition (basic and acidic residues); it reads KDVKDLGKTMKD. A compositionally biased stretch (acidic residues) spans 119–133; it reads QDDDAETGLTDGEEK. The tract at residues 135-381 is phospholipid binding; that stretch reads EPKEVEKLGK…AIGKVFVGYN (247 aa). 2 consecutive C2 domains span residues 141 to 260 and 272 to 405; these read KLGK…EEWR and KLGD…AQWH. Ca(2+) is bound by residues Leu-171, Asp-172, Asp-178, Asp-230, Phe-231, Asp-232, Ser-235, Lys-236, Asp-238, Asp-303, Asp-309, Asp-363, Asp-365, and Asp-371.

This sequence belongs to the synaptotagmin family. As to quaternary structure, homotetramer. It depends on Ca(2+) as a cofactor.

The protein localises to the cytoplasmic vesicle. It localises to the secretory vesicle membrane. It is found in the secretory vesicle. The protein resides in the synaptic vesicle membrane. Its subcellular location is the chromaffin granule membrane. The protein localises to the cytoplasm. Its function is as follows. Calcium sensor that participates in triggering neurotransmitter release at the synapse. May have a regulatory role in the membrane interactions during trafficking of synaptic vesicles at the active zone of the synapse. It binds acidic phospholipids with a specificity that requires the presence of both an acidic head group and a diacyl backbone. May play a role in dendrite formation by melanocytes. May play a role in regulating the secretion of hormones relevant to the reproduction and egg-laying of female geese. This Anser cygnoides (Swan goose) protein is Synaptotagmin-1.